A 404-amino-acid chain; its full sequence is Keratin, type I cuticular Ha3-I (404 aa).

The interval Met1–Glu56 is head. Positions Glu56 to Leu367 constitute an IF rod domain. The tract at residues Lys57 to Arg91 is coil 1A. Residues Asn92–Ala102 form a linker 1 region. The tract at residues Tyr103–Cys203 is coil 1B. The segment at Gln204–Val219 is linker 12. Residues Asp220–Glu363 are coil 2. Residues Asp364–Arg404 form a tail region.

Belongs to the intermediate filament family.

This is Keratin, type I cuticular Ha3-I from Mus musculus (Mouse).